The chain runs to 414 residues: Gamma-glutamyl phosphate reductase (414 aa).

The protein belongs to the gamma-glutamyl phosphate reductase family.

It is found in the cytoplasm. It carries out the reaction L-glutamate 5-semialdehyde + phosphate + NADP(+) = L-glutamyl 5-phosphate + NADPH + H(+). It participates in amino-acid biosynthesis; L-proline biosynthesis; L-glutamate 5-semialdehyde from L-glutamate: step 2/2. In terms of biological role, catalyzes the NADPH-dependent reduction of L-glutamate 5-phosphate into L-glutamate 5-semialdehyde and phosphate. The product spontaneously undergoes cyclization to form 1-pyrroline-5-carboxylate. The protein is Gamma-glutamyl phosphate reductase of Xanthomonas campestris pv. campestris (strain 8004).